The chain runs to 572 residues: MSPLTRTVAIKKTVKVLSKCQSGREYTQKFLQRAYSTSHANSTYYSRTKLFISSHSKALNIALLSGSLLLTYSYYSPKKILSLDTINGIKDYSTNTSGNINMPSPNPKGTETQKSQRSQNDQSVLILNDSKIEAKLHDREESHFVNRGTGIFRYDVAQLPSNHPIEDDHVEQIITIPIESEDGKSIEKDLYFFGIFDGHGGPFTSEKLSKDLVRYVAYQLGQVYDQNKTVFHSDPNQLIDSAISKGFLKLDNDLVIESFRKLFQDPNNTNIANTLPAISGSCALLSLYNSTNSILKVAVTGDSRALICGLDNEGNWTVKSLSTDQTGDNLDEVRRIRKEHPGEPNVIRNGRILGSLQPSRAFGDYRYKIKEVDGKPLSDLPEVAKLYFRREPRDFKTPPYVTAEPVITSAKIGENTKFMVMGSDGLFELLTNEEIASLVIRWMDKNMNLAPVKAEPGKLPKVIDVSEDKEAQRPAFRYKDNNSSSPSGSNPEYLIEDKNVATHLIRNALSAGGRKEYVSALVSIPSPMSRRYRDDLTVTVAFFGDSGTPSIVSNATSIVMNPEATTKPKPRL.

Residues 95-122 (NTSGNINMPSPNPKGTETQKSQRSQNDQ) form a disordered region. The PPM-type phosphatase domain maps to 153 to 543 (RYDVAQLPSN…DDLTVTVAFF (391 aa)). 4 residues coordinate Mn(2+): D197, G198, D424, and D480. Positions 470 to 480 (EAQRPAFRYKD) are enriched in basic and acidic residues. The tract at residues 470 to 492 (EAQRPAFRYKDNNSSSPSGSNPE) is disordered. Low complexity predominate over residues 481-491 (NNSSSPSGSNP).

This sequence belongs to the PP2C family. It depends on Mg(2+) as a cofactor. Requires Mn(2+) as cofactor. In terms of processing, processed by mitochondrial inner membrane protease (IMP) complex and released to the intermembrane space.

The protein resides in the mitochondrion intermembrane space. The enzyme catalyses O-phospho-L-seryl-[pyruvate dehydrogenase E1 alpha subunit] + H2O = L-seryl-[pyruvate dehydrogenase E1 alpha subunit] + phosphate. Its function is as follows. Catalyzes the dephosphorylation and concomitant reactivation of the E1 alpha subunit (PDA1) of the pyruvate dehydrogenase complex. The sequence is that of [Pyruvate dehydrogenase [acetyl-transferring]]-phosphatase 1, mitochondrial (PTC5) from Saccharomyces cerevisiae (strain ATCC 204508 / S288c) (Baker's yeast).